The chain runs to 621 residues: Chaperone protein HtpG (621 aa).

Positions 1 to 341 (MSNQEYTFQT…SEDLPLNVSR (341 aa)) are a; substrate-binding. The segment at 342–547 (EILQQNKILA…GDEQNAMMAN (206 aa)) is b. Residues 548–621 (LMRQMGQNMP…RLNSVLLKAL (74 aa)) are c.

This sequence belongs to the heat shock protein 90 family. Homodimer.

The protein localises to the cytoplasm. Functionally, molecular chaperone. Has ATPase activity. The polypeptide is Chaperone protein HtpG (Helicobacter acinonychis (strain Sheeba)).